Consider the following 123-residue polypeptide: Large ribosomal subunit protein bL12 (123 aa).

The protein belongs to the bacterial ribosomal protein bL12 family. As to quaternary structure, homodimer. Part of the ribosomal stalk of the 50S ribosomal subunit. Forms a multimeric L10(L12)X complex, where L10 forms an elongated spine to which 2 to 4 L12 dimers bind in a sequential fashion. Binds GTP-bound translation factors.

Forms part of the ribosomal stalk which helps the ribosome interact with GTP-bound translation factors. Is thus essential for accurate translation. The polypeptide is Large ribosomal subunit protein bL12 (Finegoldia magna (strain ATCC 29328 / DSM 20472 / WAL 2508) (Peptostreptococcus magnus)).